Here is a 181-residue protein sequence, read N- to C-terminus: Capsid protein VP4 (181 aa).

Its subcellular location is the virion. Functionally, VP4 self-assembles to form, together with capsid protein VP10, an icosahedral caspid of 87 nm in diameter, with a T=43 symmetry and composed of 420 hexamers and 12 pentamers. VP4 proteins arrange into hexons, while VP10 proteins form the pentameric densities located at the 5-fold axes in the virion. The stoichiometry of VP4:VP10 is 42:1. The chain is Capsid protein VP4 from Sulfolobus (SPV1).